The primary structure comprises 170 residues: tRNA-specific adenosine deaminase 2 (170 aa).

Positions Glu-3–Ile-128 constitute a CMP/dCMP-type deaminase domain. Residue His-54 participates in Zn(2+) binding. The active-site Proton donor is the Glu-56. Cys-90 and Cys-93 together coordinate Zn(2+).

The protein belongs to the cytidine and deoxycytidylate deaminase family. ADAT2 subfamily. The cofactor is Zn(2+).

It catalyses the reaction adenosine(34) in tRNA + H2O + H(+) = inosine(34) in tRNA + NH4(+). Probably participates in deamination of adenosine-34 to inosine in many tRNAs. In Xenopus tropicalis (Western clawed frog), this protein is tRNA-specific adenosine deaminase 2 (adat2).